A 321-amino-acid chain; its full sequence is Peroxidase 28 (321 aa).

The N-terminal stretch at 1-21 is a signal peptide; sequence MKIATFSVLLLLLFIFPVALA. 4 cysteine pairs are disulfide-bonded: Cys32/Cys111, Cys65/Cys70, Cys117/Cys317, and Cys196/Cys228. His63 acts as the Proton acceptor in catalysis. 5 residues coordinate Ca(2+): Asp64, Val67, Gly69, Asp71, and Ser73. Pro159 is a substrate binding site. His189 lines the heme b pocket. Thr190 serves as a coordination point for Ca(2+). Residues Asp238, Thr244, and Asp249 each contribute to the Ca(2+) site.

Belongs to the peroxidase family. Classical plant (class III) peroxidase subfamily. The cofactor is heme b. Ca(2+) is required as a cofactor.

Its subcellular location is the secreted. It catalyses the reaction 2 a phenolic donor + H2O2 = 2 a phenolic radical donor + 2 H2O. Functionally, removal of H(2)O(2), oxidation of toxic reductants, biosynthesis and degradation of lignin, suberization, auxin catabolism, response to environmental stresses such as wounding, pathogen attack and oxidative stress. These functions might be dependent on each isozyme/isoform in each plant tissue. The sequence is that of Peroxidase 28 (PER28) from Arabidopsis thaliana (Mouse-ear cress).